Here is a 158-residue protein sequence, read N- to C-terminus: Transcription elongation factor GreA (158 aa).

Residues 45–72 (AEYHAAREQQSFIEGRIKQLEGELSHAE) are a coiled coil.

The protein belongs to the GreA/GreB family.

In terms of biological role, necessary for efficient RNA polymerase transcription elongation past template-encoded arresting sites. The arresting sites in DNA have the property of trapping a certain fraction of elongating RNA polymerases that pass through, resulting in locked ternary complexes. Cleavage of the nascent transcript by cleavage factors such as GreA or GreB allows the resumption of elongation from the new 3'terminus. GreA releases sequences of 2 to 3 nucleotides. The protein is Transcription elongation factor GreA of Xanthomonas campestris pv. campestris (strain ATCC 33913 / DSM 3586 / NCPPB 528 / LMG 568 / P 25).